The following is a 427-amino-acid chain: Interferon regulatory factor 3 (427 aa).

Thr-3 is modified (phosphothreonine). A DNA-binding region (IRF tryptophan pentad repeat) is located at residues 5 to 111 (KPRILPWLVS…DPHKIYEFVN (107 aa)). Phosphoserine is present on Ser-14. Residue Thr-75 is modified to Phosphothreonine. A compositionally biased stretch (basic and acidic residues) spans 91–107 (RLAEDRSKDPHDPHKIY). Residues 91–136 (RLAEDRSKDPHDPHKIYEFVNSGVGDFSQPDTSPDTNGGGSTSDTQ) form a disordered region. Phosphoserine is present on residues Ser-97 and Ser-123. The short motif at 139 to 149 (ILDELLGNMVL) is the Nuclear export signal element. Residues 141–427 (DELLGNMVLA…GMDFQGPGES (287 aa)) form a mediates interaction with ZDHHC11 region. Position 175 is a (Microbial infection) Phosphoserine (Ser-175). Thr-180 carries the phosphothreonine modification. Ser-188 carries the phosphoserine modification. Lys-193 participates in a covalent cross-link: Glycyl lysine isopeptide (Lys-Gly) (interchain with G-Cter in ISG15). The interval 200–360 (EEWEFEVTAF…SWPQDQPWTK (161 aa)) is interaction with HERC5. Phosphothreonine occurs at positions 237, 244, and 253. An intrachain disulfide couples Cys-267 to Cys-289. Glycyl lysine isopeptide (Lys-Gly) (interchain with G-Cter in ISG15) cross-links involve residues Lys-360 and Lys-366. Position 366 is an N6-acetyllysine (Lys-366). Residue Ser-385 is modified to Phosphoserine. Ser-386 carries the post-translational modification Diphosphoserine. Ser-386 is modified (phosphoserine; by TBK1). Residue Ser-396 is modified to Phosphoserine; by IKKE and TBK1. The residue at position 398 (Ser-398) is a Phosphoserine. Thr-404 is modified (phosphothreonine). Ser-427 bears the Phosphoserine mark.

The protein belongs to the IRF family. In terms of assembly, monomer. Homodimer; phosphorylation-induced. Interacts (when phosphorylated) with CREBBP. Interacts with MAVS (via phosphorylated pLxIS motif). Interacts with TICAM1 (via phosphorylated pLxIS motif). Interacts with STING1 (via phosphorylated pLxIS motif). Interacts with IKBKE and TBK1. Interacts with TICAM2. Interacts with RBCK1. Interacts with HERC5. Interacts with DDX3X (phosphorylated at 'Ser-102'); the interaction allows the phosphorylation and activation of IRF3 by IKBKE. Interacts with TRIM21 and ULK1, in the presence of TRIM21; this interaction leads to IRF3 degradation by autophagy. Interacts with RIOK3; RIOK3 probably mediates the interaction of TBK1 with IRF3. Interacts with ILRUN; the interaction inhibits IRF3 binding to its DNA consensus sequence. Interacts with LYAR; this interaction impairs IRF3 DNA-binding activity. Interacts with TRAF3. Interacts with ZDHHC11; ZDHHC11 recruits IRF3 to STING1 upon DNA virus infection and thereby promotes IRF3 activation. Interacts with HSP90AA1; the interaction mediates IRF3 association with TOMM70. Interacts with BCL2; the interaction decreases upon Sendai virus infection. Interacts with BAX; the interaction is direct, increases upon Sendai virus infection and mediates the formation of the apoptosis complex TOMM70:HSP90AA1:IRF3:BAX. Interacts with DDX56. Interacts with NBR1. (Microbial infection) Interacts with rotavirus A NSP1 (via pLxIS motif); this interaction leads to the proteasome-dependent degradation of IRF3. As to quaternary structure, (Microbial infection) Interacts with herpes virus 8/HHV-8 protein VIRF1. In terms of assembly, (Microbial infection) Interacts with Seneca Valley virus protease 3C; this interaction is involved in the suppression of IRF3 expression and phosphorylation by the virus. (Microbial infection) Interacts with herpes virus 2/HHV-2 protein ICP27; this interaction inhibits IRF3 phosphorylation and nuclear translocation. As to quaternary structure, (Microbial infection) Interacts with human cytomegalovirus protein UL44; this interaction prevents IRF3 binding to its promoters. In terms of assembly, (Microbial infection) Interacts with the two fragments of MERS-COV protein N produced by CASP6 through proteolytic cleavage; both interactions inhibit IRF3 nuclear translocation after activation and IFN signaling. Post-translationally, constitutively phosphorylated on many Ser/Thr residues. Activated following phosphorylation by TBK1 and IKBKE. Innate adapter proteins, such as MAVS, STING1 or TICAM1, are first activated by viral RNA, cytosolic DNA, and bacterial lipopolysaccharide (LPS), respectively, leading to activation of the kinases TBK1 and IKBKE. These kinases then phosphorylate the adapter proteins on the pLxIS motif, leading to recruitment of IRF3, thereby licensing IRF3 for phosphorylation by TBK1. Phosphorylation at Ser-386 is followed by pyrophosphorylation at the same residue, promoting phosphorylation at Ser-396. Phosphorylated IRF3 dissociates from the adapter proteins, dimerizes, and then enters the nucleus to induce IFNs. Pyrophosphorylated by UAP1 following phosphorylation at Ser-386 by TBK1. Pyrophosphorylation promotes subsequent phosphorylation at Ser-396, leading to homodimerization of IRF3. In terms of processing, acetylation at Lys-366 by KAT8 inhibits recruimtent to promoters and transcription factor activity. Acetylation by KAT8 is promoted by phosphorylation at Ser-396. Post-translationally, ubiquitinated; ubiquitination involves RBCK1 leading to proteasomal degradation. Polyubiquitinated; ubiquitination involves TRIM21 leading to proteasomal degradation. Ubiquitinated by UBE3C, leading to its degradation. Deubiquitinated by USP5 on both 'Lys-48'-linked unanchored and 'Lys-63'-linked anchored polyubiquitin, leading to inhibition of anti-RNA viral innate immunity. ISGylated by HERC5 resulting in sustained IRF3 activation and in the inhibition of IRF3 ubiquitination by disrupting PIN1 binding. The phosphorylation state of IRF3 does not alter ISGylation. In terms of processing, proteolytically cleaved by apoptotic caspases during apoptosis, leading to its inactivation. Cleavage by CASP3 during virus-induced apoptosis inactivates it, preventing cytokine overproduction. Post-translationally, (Microbial infection) ISGylated. ISGylation is cleaved and removed by SARS-COV-2 nsp3 which attenuates type I interferon responses. (Microbial infection) Phosphorylation and subsequent activation of IRF3 is inhibited by vaccinia virus protein E3. In terms of processing, (Microbial infection) Phosphorylated by herpes simplex virus 1/HHV-1 US3 at Ser-175 to prevent IRF3 activation. Expressed constitutively in a variety of tissues.

Its subcellular location is the cytoplasm. It localises to the nucleus. The protein resides in the mitochondrion. Its activity is regulated as follows. In the absence of viral infection, maintained as a monomer in an autoinhibited state. Phosphorylation by TBK1 and IKBKE disrupts this autoinhibition leading to the liberation of the DNA-binding and dimerization activities and its nuclear localization where it can activate type I IFN and ISG genes. Phosphorylation and activation follow the following steps: innate adapter proteins, such as MAVS, STING1 or TICAM1, are first activated by viral RNA, cytosolic DNA and bacterial lipopolysaccharide (LPS), respectively, leading to activation of the kinases TBK1 and IKBKE. These kinases then phosphorylate the adapter proteins on their pLxIS motif, leading to recruitment of IRF3, thereby licensing IRF3 for phosphorylation by TBK1. Phosphorylated IRF3 dissociates from the adapter proteins, dimerizes, and then enters the nucleus to induce IFNs. (Microbial infection) Activated upon coronavirus SARS-CoV-2 infection. Functionally, key transcriptional regulator of type I interferon (IFN)-dependent immune responses which plays a critical role in the innate immune response against DNA and RNA viruses. Regulates the transcription of type I IFN genes (IFN-alpha and IFN-beta) and IFN-stimulated genes (ISG) by binding to an interferon-stimulated response element (ISRE) in their promoters. Acts as a more potent activator of the IFN-beta (IFNB) gene than the IFN-alpha (IFNA) gene and plays a critical role in both the early and late phases of the IFNA/B gene induction. Found in an inactive form in the cytoplasm of uninfected cells and following viral infection, double-stranded RNA (dsRNA), or toll-like receptor (TLR) signaling, is phosphorylated by IKBKE and TBK1 kinases. This induces a conformational change, leading to its dimerization and nuclear localization and association with CREB binding protein (CREBBP) to form dsRNA-activated factor 1 (DRAF1), a complex which activates the transcription of the type I IFN and ISG genes. Can activate distinct gene expression programs in macrophages and can induce significant apoptosis in primary macrophages. In response to Sendai virus infection, is recruited by TOMM70:HSP90AA1 to mitochondrion and forms an apoptosis complex TOMM70:HSP90AA1:IRF3:BAX inducing apoptosis. Key transcription factor regulating the IFN response during SARS-CoV-2 infection. This is Interferon regulatory factor 3 from Homo sapiens (Human).